The chain runs to 117 residues: UPF0102 protein Ssed_4252 (117 aa).

This sequence belongs to the UPF0102 family.

The polypeptide is UPF0102 protein Ssed_4252 (Shewanella sediminis (strain HAW-EB3)).